Consider the following 657-residue polypeptide: 2',3'-cyclic-nucleotide 2'-phosphodiesterase/3'-nucleotidase (657 aa).

An N-terminal signal peptide occupies residues 1–26; it reads MMNRRHFIQISATSILALSANRFAMA. 7 residues coordinate a divalent metal cation: aspartate 41, histidine 43, aspartate 86, asparagine 126, histidine 235, histidine 267, and histidine 269. Substrate is bound by residues tyrosine 450 and 554–559; that span reads YRAYGN.

The protein belongs to the 5'-nucleotidase family. It depends on a divalent metal cation as a cofactor.

Its subcellular location is the periplasm. It carries out the reaction a nucleoside 2',3'-cyclic phosphate + H2O = a nucleoside 3'-phosphate + H(+). The enzyme catalyses a ribonucleoside 3'-phosphate + H2O = a ribonucleoside + phosphate. In terms of biological role, this bifunctional enzyme catalyzes two consecutive reactions during ribonucleic acid degradation. Converts a 2',3'-cyclic nucleotide to a 3'-nucleotide and then the 3'-nucleotide to the corresponding nucleoside and phosphate. The polypeptide is 2',3'-cyclic-nucleotide 2'-phosphodiesterase/3'-nucleotidase (cpdB) (Haemophilus influenzae (strain ATCC 51907 / DSM 11121 / KW20 / Rd)).